The sequence spans 119 residues: Ribonuclease (119 aa).

Residues Lys-6 and Arg-9 each contribute to the substrate site. His-11 serves as the catalytic Proton acceptor. 3 disulfide bridges follow: Cys-26-Cys-81, Cys-40-Cys-92, and Cys-58-Cys-107. Substrate is bound by residues 41 to 45 (KFTNT) and Arg-82. His-114 functions as the Proton donor in the catalytic mechanism.

Belongs to the pancreatic ribonuclease family. As to quaternary structure, monomer. Interacts with and forms tight 1:1 complexes with RNH1. Dimerization of two such complexes may occur. Interaction with RNH1 inhibits this protein. As to expression, pancreas.

It localises to the secreted. The enzyme catalyses an [RNA] containing cytidine + H2O = an [RNA]-3'-cytidine-3'-phosphate + a 5'-hydroxy-ribonucleotide-3'-[RNA].. The catalysed reaction is an [RNA] containing uridine + H2O = an [RNA]-3'-uridine-3'-phosphate + a 5'-hydroxy-ribonucleotide-3'-[RNA].. In terms of biological role, endonuclease that catalyzes the cleavage of RNA on the 3' side of pyrimidine nucleotides. Acts on single-stranded and double-stranded RNA. The chain is Ribonuclease from Chelydra serpentina (Snapping turtle).